The sequence spans 98 residues: Ig heavy chain V region 6.96 (98 aa).

Positions 1-98 (EVQLVESGGG…EDTAMYYCAR (98 aa)) constitute an Ig-like domain.

The sequence is that of Ig heavy chain V region 6.96 from Mus musculus (Mouse).